A 979-amino-acid chain; its full sequence is Glycine dehydrogenase (decarboxylating) (979 aa).

Residue K726 is modified to N6-(pyridoxal phosphate)lysine.

It belongs to the GcvP family. In terms of assembly, the glycine cleavage system is composed of four proteins: P, T, L and H. Requires pyridoxal 5'-phosphate as cofactor.

It carries out the reaction N(6)-[(R)-lipoyl]-L-lysyl-[glycine-cleavage complex H protein] + glycine + H(+) = N(6)-[(R)-S(8)-aminomethyldihydrolipoyl]-L-lysyl-[glycine-cleavage complex H protein] + CO2. Functionally, the glycine cleavage system catalyzes the degradation of glycine. The P protein binds the alpha-amino group of glycine through its pyridoxal phosphate cofactor; CO(2) is released and the remaining methylamine moiety is then transferred to the lipoamide cofactor of the H protein. The chain is Glycine dehydrogenase (decarboxylating) from Ralstonia pickettii (strain 12J).